A 418-amino-acid polypeptide reads, in one-letter code: Gamma-glutamyl phosphate reductase (418 aa).

The protein belongs to the gamma-glutamyl phosphate reductase family.

It is found in the cytoplasm. It catalyses the reaction L-glutamate 5-semialdehyde + phosphate + NADP(+) = L-glutamyl 5-phosphate + NADPH + H(+). The protein operates within amino-acid biosynthesis; L-proline biosynthesis; L-glutamate 5-semialdehyde from L-glutamate: step 2/2. Catalyzes the NADPH-dependent reduction of L-glutamate 5-phosphate into L-glutamate 5-semialdehyde and phosphate. The product spontaneously undergoes cyclization to form 1-pyrroline-5-carboxylate. The polypeptide is Gamma-glutamyl phosphate reductase (Trichlorobacter lovleyi (strain ATCC BAA-1151 / DSM 17278 / SZ) (Geobacter lovleyi)).